Reading from the N-terminus, the 69-residue chain is Large ribosomal subunit protein uL29 (69 aa).

It belongs to the universal ribosomal protein uL29 family.

This chain is Large ribosomal subunit protein uL29, found in Parasynechococcus marenigrum (strain WH8102).